The primary structure comprises 29 residues: Augerpeptide hheTx2 (29 aa).

In terms of processing, contains 4 disulfide bonds. As to expression, expressed by the venom duct.

The protein localises to the secreted. This is Augerpeptide hheTx2 from Hastula hectica (Sea snail).